The primary structure comprises 253 residues: Phosphate import ATP-binding protein PstB (253 aa).

Residues 1–249 (MKLMDVRVSG…PRHELTKKFL (249 aa)) enclose the ABC transporter domain. 38–45 (GPSGSGKS) provides a ligand contact to ATP.

The protein belongs to the ABC transporter superfamily. Phosphate importer (TC 3.A.1.7) family. In terms of assembly, the complex is composed of two ATP-binding proteins (PstB), two transmembrane proteins (PstC and PstA) and a solute-binding protein (PstS).

It localises to the cell membrane. It catalyses the reaction phosphate(out) + ATP + H2O = ADP + 2 phosphate(in) + H(+). Part of the ABC transporter complex PstSACB involved in phosphate import. Responsible for energy coupling to the transport system. This Aeropyrum pernix (strain ATCC 700893 / DSM 11879 / JCM 9820 / NBRC 100138 / K1) protein is Phosphate import ATP-binding protein PstB.